A 440-amino-acid chain; its full sequence is tRNA (guanine(37)-N(1))-methyltransferase (440 aa).

S-adenosyl-L-methionine is bound by residues His-217, 255 to 256 (DL), 283 to 284 (DG), and Asn-315.

This sequence belongs to the class I-like SAM-binding methyltransferase superfamily. TRM5/TYW2 family. In terms of assembly, monomer.

It is found in the mitochondrion matrix. The protein resides in the nucleus. Its subcellular location is the cytoplasm. The catalysed reaction is guanosine(37) in tRNA + S-adenosyl-L-methionine = N(1)-methylguanosine(37) in tRNA + S-adenosyl-L-homocysteine + H(+). Functionally, specifically methylates the N1 position of guanosine-37 in various cytoplasmic and mitochondrial tRNAs. Methylation is not dependent on the nature of the nucleoside 5' of the target nucleoside. This is the first step in the biosynthesis of wybutosine (yW), a modified base adjacent to the anticodon of tRNAs and required for accurate decoding. This is tRNA (guanine(37)-N(1))-methyltransferase from Drosophila pseudoobscura pseudoobscura (Fruit fly).